We begin with the raw amino-acid sequence, 381 residues long: Subtilisin NAT (381 aa).

The first 29 residues, M1–A29, serve as a signal peptide directing secretion. Residues A30–Y106 constitute a propeptide that is removed on maturation. Residues K38–A103 enclose the Inhibitor I9 domain. The Peptidase S8 domain maps to P111–A380. The Charge relay system role is filled by D138. D147 provides a ligand contact to Ca(2+). Residue H170 is the Charge relay system of the active site. The Ca(2+) site is built by L181, N183, I185, V187, A275, Y277, T280, and D303. Catalysis depends on S327, which acts as the Charge relay system.

Belongs to the peptidase S8 family. Monomer. Ca(2+) is required as a cofactor.

It localises to the secreted. The enzyme catalyses Hydrolysis of proteins with broad specificity for peptide bonds, and a preference for a large uncharged residue in P1. Hydrolyzes peptide amides.. With respect to regulation, inhibited by PMSF (phenylmethylsulfonyl fluoride). Its function is as follows. Subtilisin is an extracellular alkaline serine protease, it catalyzes the hydrolysis of proteins and peptide amides. Subtilisin NAT also has fibrinolytic activity. This Bacillus subtilis subsp. natto protein is Subtilisin NAT.